The primary structure comprises 449 residues: Glucose-6-phosphate isomerase (449 aa).

The active-site Proton donor is the glutamate 291. Residues histidine 312 and lysine 426 contribute to the active site.

This sequence belongs to the GPI family.

The protein resides in the cytoplasm. It carries out the reaction alpha-D-glucose 6-phosphate = beta-D-fructose 6-phosphate. It functions in the pathway carbohydrate biosynthesis; gluconeogenesis. It participates in carbohydrate degradation; glycolysis; D-glyceraldehyde 3-phosphate and glycerone phosphate from D-glucose: step 2/4. Functionally, catalyzes the reversible isomerization of glucose-6-phosphate to fructose-6-phosphate. In Streptococcus thermophilus (strain CNRZ 1066), this protein is Glucose-6-phosphate isomerase.